The sequence spans 688 residues: Elongation factor G 2 (688 aa).

Residues 7–282 (DSIRNIGIIS…AVAAYLPSPR (276 aa)) enclose the tr-type G domain. Residues 16-23 (SHIDAGKT), 80-84 (DTPGH), and 134-137 (NKMD) contribute to the GTP site.

It belongs to the TRAFAC class translation factor GTPase superfamily. Classic translation factor GTPase family. EF-G/EF-2 subfamily.

The protein localises to the cytoplasm. In terms of biological role, catalyzes the GTP-dependent ribosomal translocation step during translation elongation. During this step, the ribosome changes from the pre-translocational (PRE) to the post-translocational (POST) state as the newly formed A-site-bound peptidyl-tRNA and P-site-bound deacylated tRNA move to the P and E sites, respectively. Catalyzes the coordinated movement of the two tRNA molecules, the mRNA and conformational changes in the ribosome. In Geobacter metallireducens (strain ATCC 53774 / DSM 7210 / GS-15), this protein is Elongation factor G 2.